The following is a 69-amino-acid chain: uncharacterized protein (69 aa).

Residues 22-48 (LFRKSRELSPIKPVRTPTPPAPTPPPM) form a disordered region. Residues 37–48 (TPTPPAPTPPPM) show a composition bias toward pro residues.

This is an uncharacterized protein from Lepidoptera (butterflies and moths).